Consider the following 285-residue polypeptide: Diphthine methyl ester synthase (285 aa).

Residues leucine 9, aspartate 84, glycine 87, 112-113 (SI), and leucine 163 contribute to the S-adenosyl-L-methionine site. Serine 171 is modified (phosphoserine). Valine 225 and histidine 250 together coordinate S-adenosyl-L-methionine.

It belongs to the diphthine synthase family.

It carries out the reaction 2-[(3S)-amino-3-carboxypropyl]-L-histidyl-[translation elongation factor 2] + 4 S-adenosyl-L-methionine = diphthine methyl ester-[translation elongation factor 2] + 4 S-adenosyl-L-homocysteine + 3 H(+). Its pathway is protein modification; peptidyl-diphthamide biosynthesis. Its function is as follows. S-adenosyl-L-methionine-dependent methyltransferase that catalyzes four methylations of the modified target histidine residue in translation elongation factor 2 (EF-2), to form an intermediate called diphthine methyl ester. The four successive methylation reactions represent the second step of diphthamide biosynthesis. The polypeptide is Diphthine methyl ester synthase (DPH5) (Homo sapiens (Human)).